The primary structure comprises 109 residues: Glutaredoxin-C13 (109 aa).

The Glutaredoxin domain maps to 2 to 108; it reads AEMVARLASE…PMLKNAGALW (107 aa). Residues cysteine 22 and cysteine 25 are joined by a disulfide bond. The short motif at 106–109 is the Responsive for interaction with TGA factors element; the sequence is ALWL.

It belongs to the glutaredoxin family. CC-type subfamily.

The protein resides in the cytoplasm. The protein localises to the nucleus. Has a glutathione-disulfide oxidoreductase activity in the presence of NADPH and glutathione reductase. Reduces low molecular weight disulfides and proteins. The protein is Glutaredoxin-C13 (GRXC13) of Oryza sativa subsp. japonica (Rice).